We begin with the raw amino-acid sequence, 229 residues long: Mediator of RNA polymerase II transcription subunit 7 (229 aa).

Belongs to the Mediator complex subunit 7 family. As to quaternary structure, component of the Mediator complex.

It is found in the nucleus. Its function is as follows. Component of the Mediator complex, a coactivator involved in the regulated transcription of nearly all RNA polymerase II-dependent genes. Mediator functions as a bridge to convey information from gene-specific regulatory proteins to the basal RNA polymerase II transcription machinery. Mediator is recruited to promoters by direct interactions with regulatory proteins and serves as a scaffold for the assembly of a functional preinitiation complex with RNA polymerase II and the general transcription factors. This chain is Mediator of RNA polymerase II transcription subunit 7 (med7), found in Xenopus tropicalis (Western clawed frog).